We begin with the raw amino-acid sequence, 65 residues long: uncharacterized protein (65 aa).

Cysteine 9 functions as the Nucleophile in the catalytic mechanism. Arginine 15 is an active-site residue.

Belongs to the low molecular weight phosphotyrosine protein phosphatase family.

This is an uncharacterized protein from Synechococcus sp. (strain WH8020).